The chain runs to 240 residues: Large ribosomal subunit protein uL1c (240 aa).

This sequence belongs to the universal ribosomal protein uL1 family. In terms of assembly, part of the 50S ribosomal subunit.

It is found in the plastid. The protein resides in the chloroplast. Functionally, binds directly to 23S rRNA. Might be involved in E site tRNA release (Potential). This chain is Large ribosomal subunit protein uL1c (rpl1), found in Cyanidium caldarium (Red alga).